A 243-amino-acid polypeptide reads, in one-letter code: Probable transcriptional regulatory protein Athe_0816 (243 aa).

The protein belongs to the TACO1 family.

The protein localises to the cytoplasm. The chain is Probable transcriptional regulatory protein Athe_0816 from Caldicellulosiruptor bescii (strain ATCC BAA-1888 / DSM 6725 / KCTC 15123 / Z-1320) (Anaerocellum thermophilum).